The sequence spans 88 residues: MGIARILSAVLFLSVLFVVTFPALLSADHHDGRIDTCRLPSDRGRCKASFERWYFNGRTCAKFIYGGCGGNGNKFPTQEACMKRCAKA.

Positions 1–27 (MGIARILSAVLFLSVLFVVTFPALLSA) are cleaved as a signal peptide. The propeptide occupies 28-33 (DHHDGR). Residues 37–85 (CRLPSDRGRCKASFERWYFNGRTCAKFIYGGCGGNGNKFPTQEACMKRC) form the BPTI/Kunitz inhibitor domain. 3 cysteine pairs are disulfide-bonded: cysteine 37/cysteine 85, cysteine 46/cysteine 68, and cysteine 60/cysteine 81.

The protein belongs to the venom Kunitz-type family. 02 (native) subfamily. In terms of tissue distribution, expressed by the venom gland.

It localises to the secreted. Its function is as follows. Serine protease inhibitor that inhibits trypsin (Ki=5.54 uM) at a molar ratio of 1:1. The protein is Kunitz-type kappaPI-theraphotoxin-Hs1a of Cyriopagopus schmidti (Chinese bird spider).